The sequence spans 428 residues: Phosphomethylpyrimidine synthase (428 aa).

Substrate-binding positions include Asn-66, Met-94, Tyr-123, His-162, 184–186, 225–228, and Glu-264; these read SRG and DALR. His-268 provides a ligand contact to Zn(2+). Tyr-291 is a substrate binding site. His-332 serves as a coordination point for Zn(2+). Positions 408, 411, and 415 each coordinate [4Fe-4S] cluster.

It belongs to the ThiC family. The cofactor is [4Fe-4S] cluster.

It catalyses the reaction 5-amino-1-(5-phospho-beta-D-ribosyl)imidazole + S-adenosyl-L-methionine = 4-amino-2-methyl-5-(phosphooxymethyl)pyrimidine + CO + 5'-deoxyadenosine + formate + L-methionine + 3 H(+). Its pathway is cofactor biosynthesis; thiamine diphosphate biosynthesis. Catalyzes the synthesis of the hydroxymethylpyrimidine phosphate (HMP-P) moiety of thiamine from aminoimidazole ribotide (AIR) in a radical S-adenosyl-L-methionine (SAM)-dependent reaction. The protein is Phosphomethylpyrimidine synthase of Sulfolobus acidocaldarius (strain ATCC 33909 / DSM 639 / JCM 8929 / NBRC 15157 / NCIMB 11770).